The sequence spans 416 residues: Cyclin-dependent kinase 8 (416 aa).

An interaction with CCNC region spans residues 1–15 (MDYDFKVKLTGERER). Residues 21–287 (EYEGCKVGRG…SEQAMQDPYF (267 aa)) enclose the Protein kinase domain. ATP-binding positions include 27–35 (VGRGTYGHV) and Lys52. The active-site Proton acceptor is the Asp151. The interval 313 to 416 (EEEPDDKGDK…PQYSHQTHRY (104 aa)) is disordered. The span at 325–343 (QQQQQGNNHTNGTGHPGNQ) shows a compositional bias: low complexity. Polar residues-rich tracts occupy residues 361 to 378 (PTTT…QRSN) and 386 to 416 (PGPS…THRY).

It belongs to the protein kinase superfamily. CMGC Ser/Thr protein kinase family. CDC2/CDKX subfamily. Component of the Mediator complex. Interacts with ccnc. Mg(2+) is required as a cofactor.

It localises to the nucleus. It catalyses the reaction L-seryl-[protein] + ATP = O-phospho-L-seryl-[protein] + ADP + H(+). The enzyme catalyses L-threonyl-[protein] + ATP = O-phospho-L-threonyl-[protein] + ADP + H(+). It carries out the reaction [DNA-directed RNA polymerase] + ATP = phospho-[DNA-directed RNA polymerase] + ADP + H(+). Component of the Mediator complex, a coactivator involved in regulated gene transcription of nearly all RNA polymerase II-dependent genes. Mediator functions as a bridge to convey information from gene-specific regulatory proteins to the basal RNA polymerase II transcription machinery. Mediator is recruited to promoters by direct interactions with regulatory proteins and serves as a scaffold for the assembly of a functional pre-initiation complex with RNA polymerase II and the general transcription factors. Phosphorylates the CTD (C-terminal domain) of the large subunit of RNA polymerase II (RNAp II), which may inhibit the formation of a transcription initiation complex. This Xenopus laevis (African clawed frog) protein is Cyclin-dependent kinase 8 (cdk8).